The following is a 414-amino-acid chain: Glutamyl-tRNA reductase (414 aa).

Residues 49–52 (TCNR), Ser-108, 113–115 (EPQ), and Gln-119 each bind substrate. The active-site Nucleophile is the Cys-50. 188 to 193 (GAGQTG) provides a ligand contact to NADP(+).

This sequence belongs to the glutamyl-tRNA reductase family. Homodimer.

It catalyses the reaction (S)-4-amino-5-oxopentanoate + tRNA(Glu) + NADP(+) = L-glutamyl-tRNA(Glu) + NADPH + H(+). It functions in the pathway porphyrin-containing compound metabolism; protoporphyrin-IX biosynthesis; 5-aminolevulinate from L-glutamyl-tRNA(Glu): step 1/2. In terms of biological role, catalyzes the NADPH-dependent reduction of glutamyl-tRNA(Glu) to glutamate 1-semialdehyde (GSA). The sequence is that of Glutamyl-tRNA reductase from Francisella tularensis subsp. holarctica (strain LVS).